The sequence spans 475 residues: Ribosomal RNA small subunit methyltransferase F (475 aa).

Residues 125 to 131 (AAAPGSK), Glu-149, Asp-176, and Asp-194 contribute to the S-adenosyl-L-methionine site. Cys-247 serves as the catalytic Nucleophile.

This sequence belongs to the class I-like SAM-binding methyltransferase superfamily. RsmB/NOP family.

Its subcellular location is the cytoplasm. The catalysed reaction is cytidine(1407) in 16S rRNA + S-adenosyl-L-methionine = 5-methylcytidine(1407) in 16S rRNA + S-adenosyl-L-homocysteine + H(+). Its function is as follows. Specifically methylates the cytosine at position 1407 (m5C1407) of 16S rRNA. This chain is Ribosomal RNA small subunit methyltransferase F, found in Aeromonas hydrophila subsp. hydrophila (strain ATCC 7966 / DSM 30187 / BCRC 13018 / CCUG 14551 / JCM 1027 / KCTC 2358 / NCIMB 9240 / NCTC 8049).